The primary structure comprises 475 residues: Aspartyl/glutamyl-tRNA(Asn/Gln) amidotransferase subunit B (475 aa).

Belongs to the GatB/GatE family. GatB subfamily. In terms of assembly, heterotrimer of A, B and C subunits.

It catalyses the reaction L-glutamyl-tRNA(Gln) + L-glutamine + ATP + H2O = L-glutaminyl-tRNA(Gln) + L-glutamate + ADP + phosphate + H(+). It carries out the reaction L-aspartyl-tRNA(Asn) + L-glutamine + ATP + H2O = L-asparaginyl-tRNA(Asn) + L-glutamate + ADP + phosphate + 2 H(+). Functionally, allows the formation of correctly charged Asn-tRNA(Asn) or Gln-tRNA(Gln) through the transamidation of misacylated Asp-tRNA(Asn) or Glu-tRNA(Gln) in organisms which lack either or both of asparaginyl-tRNA or glutaminyl-tRNA synthetases. The reaction takes place in the presence of glutamine and ATP through an activated phospho-Asp-tRNA(Asn) or phospho-Glu-tRNA(Gln). This is Aspartyl/glutamyl-tRNA(Asn/Gln) amidotransferase subunit B from Pelodictyon phaeoclathratiforme (strain DSM 5477 / BU-1).